A 967-amino-acid polypeptide reads, in one-letter code: Regulator of G-protein signaling 3 (967 aa).

One can recognise a PDZ domain in the interval 18–95; sequence QITIRRGKDG…EIILLVWRVV (78 aa). The segment at 115 to 135 is disordered; that stretch reads THDLLSPPNKREKNCTHGAPT. An Omega-N-methylarginine modification is found at Arg167. The disordered stretch occupies residues 389 to 705; that stretch reads QLAATPTERK…EGGLSLRVQN (317 aa). 3 stretches are compositionally biased toward polar residues: residues 476 to 486, 512 to 549, and 577 to 597; these read LPSSKNPSPSQ, SPSSEDIATCQNPPQSPETSTSKDSPPGQGSSPTTEVP, and SSASDQNVLPSQESPPSQGSL. Over residues 650 to 676 the composition is skewed to acidic residues; the sequence is GEDEDAEEGEEGEEGEEDEEDDTNDDN. Residues 677–687 show a composition bias toward basic and acidic residues; that stretch reads YGDRNEAKRSS. A phosphoserine mark is found at Ser713, Ser716, Ser748, and Ser777. The interval 807–830 is disordered; the sequence is FRRRNESPGAQPAGKADKTTKSFK. A compositionally biased stretch (basic and acidic residues) spans 821–830; it reads KADKTTKSFK. An RGS domain is found at 842–967; the sequence is SLEKLLLHKY…INQKKMSPPL (126 aa).

As to quaternary structure, binds EFNB1 and EFNB2. Binds the GNB1-GNG2 heterodimer. Binds ESR1. In terms of processing, phosphorylated by cyclic GMP-dependent protein kinase. Post-translationally, ISGylated. In terms of tissue distribution, detected in kidney, uterus, ovary, heart, brain, spleen, lung and testis.

The protein localises to the cytoplasm. Its subcellular location is the membrane. The protein resides in the nucleus. In terms of biological role, down-regulates signaling from heterotrimeric G-proteins by increasing the GTPase activity of the alpha subunits, thereby driving them into their inactive GDP-bound form. Down-regulates G-protein-mediated release of inositol phosphates and activation of MAP kinases. This chain is Regulator of G-protein signaling 3 (Rgs3), found in Rattus norvegicus (Rat).